The following is a 272-amino-acid chain: Acyl-[acyl-carrier-protein]--UDP-N-acetylglucosamine O-acyltransferase (272 aa).

Belongs to the transferase hexapeptide repeat family. LpxA subfamily. In terms of assembly, homotrimer.

It localises to the cytoplasm. It carries out the reaction a (3R)-hydroxyacyl-[ACP] + UDP-N-acetyl-alpha-D-glucosamine = a UDP-3-O-[(3R)-3-hydroxyacyl]-N-acetyl-alpha-D-glucosamine + holo-[ACP]. It functions in the pathway glycolipid biosynthesis; lipid IV(A) biosynthesis; lipid IV(A) from (3R)-3-hydroxytetradecanoyl-[acyl-carrier-protein] and UDP-N-acetyl-alpha-D-glucosamine: step 1/6. Involved in the biosynthesis of lipid A, a phosphorylated glycolipid that anchors the lipopolysaccharide to the outer membrane of the cell. In Rhizobium johnstonii (strain DSM 114642 / LMG 32736 / 3841) (Rhizobium leguminosarum bv. viciae), this protein is Acyl-[acyl-carrier-protein]--UDP-N-acetylglucosamine O-acyltransferase.